The following is a 215-amino-acid chain: Large ribosomal subunit protein eL14 (215 aa).

An N6-acetyllysine modification is found at K79. K85 is subject to N6-acetyllysine; alternate. K85 bears the N6-succinyllysine; alternate mark. K124 is covalently cross-linked (Glycyl lysine isopeptide (Lys-Gly) (interchain with G-Cter in SUMO2)). At S139 the chain carries Phosphoserine. Residues 161–215 (VPAKKITAASKKAPAQKVPAQKATGQKAAPAPKAQKGQKAPAQKAPAPKASGKKA) are disordered. Repeat copies occupy residues 171–175 (KKAPA), 176–180 (QKVPA), 181–185 (QKATG), 186–190 (QKAAP), 193–195 (KAQ), and 196–198 (KGQ). A 4 X 5 AA tandem repeats of Q-K-A-[PAS]-X region spans residues 171 to 190 (KKAPAQKVPAQKATGQKAAP). The interval 193 to 198 (KAQKGQ) is 2 X 3 AA tandem repeats of K-[GA]-Q. The residue at position 204 (K204) is an N6-succinyllysine.

Belongs to the eukaryotic ribosomal protein eL14 family. As to quaternary structure, component of the large ribosomal subunit.

It is found in the cytoplasm. Component of the large ribosomal subunit. The ribosome is a large ribonucleoprotein complex responsible for the synthesis of proteins in the cell. The polypeptide is Large ribosomal subunit protein eL14 (RPL14) (Homo sapiens (Human)).